The following is a 370-amino-acid chain: D-aspartate oxidase (370 aa).

The N-terminal stretch at 1–18 is a signal peptide; it reads MPPRIIILGAGIIGLSTA. FAD is bound by residues Ile13, Glu42, Ala63, Ser64, and Gly68. Residue Asn207 is glycosylated (N-linked (GlcNAc...) asparagine). Arg308, Gly338, and Tyr339 together coordinate FAD.

This sequence belongs to the DAMOX/DASOX family. In terms of assembly, monomer. FAD is required as a cofactor.

It catalyses the reaction D-aspartate + O2 + H2O = oxaloacetate + H2O2 + NH4(+). The catalysed reaction is D-glutamate + O2 + H2O = H2O2 + 2-oxoglutarate + NH4(+). In terms of biological role, selectively catalyzes the oxidative deamination of acidic amino acids. Protects the organism from the toxicity of D-amino acids. Enables the organism to utilize D-amino acids as a source of nutrients. This chain is D-aspartate oxidase, found in Talaromyces thermophilus.